The sequence spans 336 residues: Coproporphyrin III ferrochelatase (336 aa).

S52 and Y116 together coordinate Fe-coproporphyrin III. H176 and E259 together coordinate Fe(2+).

It belongs to the ferrochelatase family.

It localises to the cytoplasm. The catalysed reaction is Fe-coproporphyrin III + 2 H(+) = coproporphyrin III + Fe(2+). Its pathway is porphyrin-containing compound metabolism; protoheme biosynthesis. In terms of biological role, involved in coproporphyrin-dependent heme b biosynthesis. Catalyzes the insertion of ferrous iron into coproporphyrin III to form Fe-coproporphyrin III. The sequence is that of Coproporphyrin III ferrochelatase from Mycobacterium leprae (strain Br4923).